Here is a 379-residue protein sequence, read N- to C-terminus: uncharacterized protein (379 aa).

A helical transmembrane segment spans residues 7 to 27; the sequence is VYIFAGIFLFIALIILIKIFF.

The protein resides in the membrane. This is an uncharacterized protein from Caenorhabditis elegans.